We begin with the raw amino-acid sequence, 180 residues long: ATP-dependent protease subunit HslV (180 aa).

The active site involves Thr-7. Na(+) is bound by residues Gly-165, Cys-168, and Thr-171.

Belongs to the peptidase T1B family. HslV subfamily. As to quaternary structure, a double ring-shaped homohexamer of HslV is capped on each side by a ring-shaped HslU homohexamer. The assembly of the HslU/HslV complex is dependent on binding of ATP.

It localises to the cytoplasm. The enzyme catalyses ATP-dependent cleavage of peptide bonds with broad specificity.. Allosterically activated by HslU binding. In terms of biological role, protease subunit of a proteasome-like degradation complex believed to be a general protein degrading machinery. The sequence is that of ATP-dependent protease subunit HslV from Bacillus cereus (strain Q1).